We begin with the raw amino-acid sequence, 335 residues long: 2-acylglycerol O-acyltransferase 1 (335 aa).

Helical transmembrane passes span tryptophan 24–isoleucine 44 and tyrosine 104–threonine 124. Residues asparagine 125 and asparagine 180 are each glycosylated (N-linked (GlcNAc...) asparagine).

It belongs to the diacylglycerol acyltransferase family.

The protein localises to the endoplasmic reticulum membrane. It catalyses the reaction a 2-acylglycerol + an acyl-CoA = a 1,2-diacylglycerol + CoA. The enzyme catalyses 2-(9Z-octadecenoyl)-glycerol + butanoyl-CoA = 1-butanoyl-2-(9Z-octadecenoyl)-glycerol + CoA. It carries out the reaction 2-(9Z-octadecenoyl)-glycerol + octanoyl-CoA = 1-octanoyl-2-(9Z-octadecenoyl)-glycerol + CoA. The catalysed reaction is 2-(9Z-octadecenoyl)-glycerol + dodecanoyl-CoA = 1-dodecanoyl-2-(9Z-octadecenoyl)-glycerol + CoA. It catalyses the reaction 2-(9Z-octadecenoyl)-glycerol + tetradecanoyl-CoA = 1-tetradecanoyl-2-(9Z-octadecenoyl)-glycerol + CoA. The enzyme catalyses 2-(9Z-octadecenoyl)-glycerol + hexadecanoyl-CoA = 1-hexadecanoyl-2-(9Z-octadecenoyl)-glycerol + CoA. It carries out the reaction 2-(9Z-octadecenoyl)-glycerol + octadecanoyl-CoA = 1-octadecanoyl-2-(9Z-octadecenoyl)-glycerol + CoA. The catalysed reaction is eicosanoyl-CoA + 2-(9Z-octadecenoyl)-glycerol = 1-eicosanoyl-2-(9Z-octadecenoyl)-glycerol + CoA. It catalyses the reaction 2-(9Z-octadecenoyl)-glycerol + (9Z)-octadecenoyl-CoA = 1,2-di-(9Z-octadecenoyl)-glycerol + CoA. The enzyme catalyses 2-(9Z-octadecenoyl)-glycerol + (9Z,12Z)-octadecadienoyl-CoA = 1-(9Z,12Z-octadecadienoyl)-2-(9Z-octadecenoyl)-glycerol + CoA. It carries out the reaction 2-(9Z-octadecenoyl)-glycerol + (5Z,8Z,11Z,14Z)-eicosatetraenoyl-CoA = 1-(5Z,8Z,11Z,14Z-eicosatetraenoyl)-2-(9Z-octadecenoyl)-glycerol + CoA. The catalysed reaction is a 2-acylglycerol + an acyl-CoA = a 1,2-diacyl-sn-glycerol + CoA. It catalyses the reaction a 2-acylglycerol + an acyl-CoA = a 2,3-diacyl-sn-glycerol + CoA. The enzyme catalyses a 1-acylglycerol + an acyl-CoA = a 1,2-diacylglycerol + CoA. It carries out the reaction 1-dodecanoylglycerol + (9Z)-octadecenoyl-CoA = 1-dodecanoyl-2-(9Z-octadecenoyl)-glycerol + CoA. The catalysed reaction is 1-tetradecanoylglycerol + (9Z)-octadecenoyl-CoA = 1-tetradecanoyl-2-(9Z-octadecenoyl)-glycerol + CoA. It catalyses the reaction 1-hexadecanoylglycerol + (9Z)-octadecenoyl-CoA = 1-hexadecanoyl-2-(9Z-octadecenoyl)-glycerol + CoA. The enzyme catalyses 1-(9Z-octadecenoyl)-glycerol + (9Z)-octadecenoyl-CoA = 1,2-di-(9Z-octadecenoyl)-glycerol + CoA. It carries out the reaction 1-(9Z,12Z-octadecadienoyl)-glycerol + (9Z)-octadecenoyl-CoA = 1-(9Z,12Z-octadecadienoyl)-2-(9Z-octadecenoyl)-glycerol + CoA. The catalysed reaction is 1-(9Z,12Z,15Z-octadecatrienoyl)-glycerol + (9Z)-octadecenoyl-CoA = 1-(9Z,12Z,15Z-octadecatrienoyl)-2-(9Z-octadecenoyl)-glycerol + CoA. It catalyses the reaction 1-(5Z,8Z,11Z,14Z-eicosatetraenoyl)-glycerol + (9Z)-octadecenoyl-CoA = 1-(5Z,8Z,11Z,14Z-eicosatetraenoyl)-2-(9Z-octadecenoyl)-glycerol + CoA. The enzyme catalyses a 1-acylglycerol + an acyl-CoA = a 1,3-diacylglycerol + CoA. It carries out the reaction 1-dodecanoylglycerol + (9Z)-octadecenoyl-CoA = 1-dodecanoyl-3-(9Z-octadecenoyl)-glycerol + CoA. The catalysed reaction is 1-hexadecanoylglycerol + (9Z)-octadecenoyl-CoA = 1-(9Z-octadecenoyl)-3-hexadecanoylglycerol + CoA. It catalyses the reaction 1-octadecanoylglycerol + (9Z)-octadecenoyl-CoA = 1-octadecanoyl-3-(9Z-octadecenoyl)-glycerol + CoA. The enzyme catalyses 1-(9Z-octadecenoyl)-sn-glycerol + (9Z)-octadecenoyl-CoA = 1,3-di-(9Z-octadecenoyl)-glycerol + CoA. It carries out the reaction 1-(9Z,12Z-octadecadienoyl)-glycerol + (9Z)-octadecenoyl-CoA = 1-(9Z-octadecenoyl)-3-(9Z,12Z-octadecadienoyl)-glycerol + CoA. The catalysed reaction is 1-(9Z,12Z,15Z-octadecatrienoyl)-glycerol + (9Z)-octadecenoyl-CoA = 1-(9Z,12Z,15Z-octadecatrienoyl)-3-(9Z-octadecenoyl)-glycerol + CoA. It catalyses the reaction a 1-acyl-sn-glycerol + an acyl-CoA = a 1,3-diacyl-sn-glycerol + CoA. The enzyme catalyses a 3-acyl-sn-glycerol + an acyl-CoA = a 1,3-diacyl-sn-glycerol + CoA. It carries out the reaction 3-octadecanoyl-sn-glycerol + (9Z)-octadecenoyl-CoA = 1-(9Z-octadecenoyl)-3-octadecanoyl-sn-glycerol + CoA. It functions in the pathway glycerolipid metabolism; triacylglycerol biosynthesis. Functionally, involved in glycerolipid synthesis and lipid metabolism. Catalyzes the formation of diacylglycerol, the precursor of triacylglycerol, by transferring the acyl chain of a fatty acyl-CoA to a monoacylglycerol, mainly at the sn-1 or sn-3 positions. It uses both sn-2-monoacylglycerol (2-acylglycerol) and sn-1-monoacylglycerol (1-acyl-sn-glycerol) equally well as substrates, and uses sn-3-monoacylglycerol (3-acyl-sn-glycerol) with lower efficiency. Probably not involved in absorption of dietary fat in the small intestine. In Bos taurus (Bovine), this protein is 2-acylglycerol O-acyltransferase 1 (MOGAT1).